The primary structure comprises 172 residues: uncharacterized protein (172 aa).

Positions 147–159 (AGSGSGSGSGSGS) are enriched in gly residues. A disordered region spans residues 147-172 (AGSGSGSGSGSGSDTGPFKKSQYKIL).

This is an uncharacterized protein from Homo sapiens (Human).